The primary structure comprises 289 residues: SNF1-related protein kinase regulatory subunit beta-2 (289 aa).

A compositionally biased stretch (basic and acidic residues) spans M1–A10. The tract at residues M1 to S59 is disordered. G2 carries the N-myristoyl glycine lipid modification. Positions P103 to L180 are kinase-interacting sequence (KIS). The association with SNF1 complex (ASC) stretch occupies residues E217–R289.

This sequence belongs to the 5'-AMP-activated protein kinase beta subunit family. As to quaternary structure, subunit of a probable heterotrimeric complex consisting of an alpha catalytic (KIN10 or KIN11) subunit, and a beta (KINB) and a gamma (KING or SNF4) non-catalytic regulatory subunits. Interacts with SNF4. Interacts with FLZ1, FLZ2, FLZ8, FLZ9, FLZ10, FLZ12, FLZ13 and FLZ14. Sumoylated. Expressed in leaves, stems, roots, flower buds and flowers. Not detectable in siliques.

It is found in the cell membrane. In terms of biological role, regulatory subunit of the probable trimeric SNF1-related protein kinase (SnRK) complex, which may play a role in a signal transduction cascade regulating gene expression and carbohydrate metabolism in higher plants. The SnRK complex may also be involved in the regulation of fatty acid synthesis by phosphorylation of acetyl-CoA carboxylase and in assimilation of nitrogen by phosphorylating nitrate reductase. The sequence is that of SNF1-related protein kinase regulatory subunit beta-2 (KINB2) from Arabidopsis thaliana (Mouse-ear cress).